The sequence spans 88 residues: L-amino-acid oxidase (88 aa).

Residues Glu74 and 81–86 (GWIDST) each bind FAD. 81-82 (GW) lines the substrate pocket.

This sequence belongs to the flavin monoamine oxidase family. FIG1 subfamily. Homodimer; non-covalently linked. FAD serves as cofactor. In terms of processing, N-glycosylated. In terms of tissue distribution, expressed by the venom gland.

It localises to the secreted. It carries out the reaction an L-alpha-amino acid + O2 + H2O = a 2-oxocarboxylate + H2O2 + NH4(+). The enzyme catalyses L-leucine + O2 + H2O = 4-methyl-2-oxopentanoate + H2O2 + NH4(+). The catalysed reaction is L-phenylalanine + O2 + H2O = 3-phenylpyruvate + H2O2 + NH4(+). It catalyses the reaction L-tryptophan + O2 + H2O = indole-3-pyruvate + H2O2 + NH4(+). It carries out the reaction L-methionine + O2 + H2O = 4-methylsulfanyl-2-oxobutanoate + H2O2 + NH4(+). The enzyme catalyses L-isoleucine + O2 + H2O = (S)-3-methyl-2-oxopentanoate + H2O2 + NH4(+). The catalysed reaction is L-arginine + O2 + H2O = 5-guanidino-2-oxopentanoate + H2O2 + NH4(+). It catalyses the reaction L-histidine + O2 + H2O = 3-(imidazol-5-yl)pyruvate + H2O2 + NH4(+). It carries out the reaction L-asparagine + O2 + H2O = 2-oxosuccinamate + H2O2 + NH4(+). The enzyme catalyses L-valine + O2 + H2O = 3-methyl-2-oxobutanoate + H2O2 + NH4(+). The catalysed reaction is L-glutamate + O2 + H2O = H2O2 + 2-oxoglutarate + NH4(+). Its function is as follows. Catalyzes an oxidative deamination of predominantly hydrophobic and aromatic L-amino acids, thus producing hydrogen peroxide that may contribute to the diverse toxic effects of this enzyme. Is highly active on L-Met, L-Leu, L-Phe, L-Ile, and L-Arg, moderately active on L-His, L-Trp, L-Asn, L-Glu, and L-Val, and weakly or not active on L-Gln, L-Lys, L-Asp, L-Ala, L-Tyr, L-Ser, L-Pro, L-Gly, L-Thr, and L-Cys. Exhibits diverse biological activities, such as hemorrhage, hemolysis, edema, apoptosis of vascular endothelial cells or tumor cell lines, antibacterial and antiparasitic activities. In addition, this protein has an ability to induce apoptosis in cultured HeLa and K562 cells, and inhibits ADP-induced platelet aggregation dose-dependently. Effects of snake L-amino oxidases on platelets are controversial, since they either induce aggregation or inhibit agonist-induced aggregation. These different effects are probably due to different experimental conditions. The chain is L-amino-acid oxidase from Vipera berus berus (Common viper).